Here is a 163-residue protein sequence, read N- to C-terminus: Ribosome maturation factor RimP (163 aa).

The segment at 66–85 (ALDRDDPVPGPPYELEVSSP) is disordered.

The protein belongs to the RimP family.

The protein localises to the cytoplasm. Functionally, required for maturation of 30S ribosomal subunits. This is Ribosome maturation factor RimP from Kocuria rhizophila (strain ATCC 9341 / DSM 348 / NBRC 103217 / DC2201).